The sequence spans 135 residues: Holo-[acyl-carrier-protein] synthase (135 aa).

Aspartate 9 and glutamate 63 together coordinate Mg(2+).

This sequence belongs to the P-Pant transferase superfamily. AcpS family. Mg(2+) is required as a cofactor.

Its subcellular location is the cytoplasm. It carries out the reaction apo-[ACP] + CoA = holo-[ACP] + adenosine 3',5'-bisphosphate + H(+). Transfers the 4'-phosphopantetheine moiety from coenzyme A to a Ser of acyl-carrier-protein. The sequence is that of Holo-[acyl-carrier-protein] synthase from Paraburkholderia phymatum (strain DSM 17167 / CIP 108236 / LMG 21445 / STM815) (Burkholderia phymatum).